We begin with the raw amino-acid sequence, 380 residues long: Tubby-like F-box protein 9 (380 aa).

An F-box domain is found at 30–76 (PFSWSELPEELLREILIRVETVDGGDWPSRRNVVACAGVCRSWRILT). The tract at residues 258–283 (SSRSSPVFRSHSKPLRSNSASCSDSG) is disordered. Residues 272 to 283 (LRSNSASCSDSG) show a composition bias toward polar residues.

This sequence belongs to the TUB family. In terms of assembly, part of a SCF (SKP1-cullin-F-box) protein ligase complex. Interacts with SKP1A/ASK1 and XERICO. As to expression, ubiquitous.

The protein operates within protein modification; protein ubiquitination. In terms of biological role, component of SCF(ASK-cullin-F-box) E3 ubiquitin ligase complexes, which may mediate the ubiquitination and subsequent proteasomal degradation of target proteins. Confers sensitivity to ABA during seed germination and early seedling development. This chain is Tubby-like F-box protein 9, found in Arabidopsis thaliana (Mouse-ear cress).